The following is a 540-amino-acid chain: CTP synthase (540 aa).

The tract at residues 1-265 (MVRFIFITGG…DNKVLKFFNL (265 aa)) is amidoligase domain. A CTP-binding site is contributed by S13. S13 contacts UTP. Residues 14–19 (SLGKGL) and D71 contribute to the ATP site. Residues D71 and E139 each coordinate Mg(2+). CTP-binding positions include 146–148 (DIE), 186–191 (KTKPTQ), and K222. Residues 186-191 (KTKPTQ) and K222 each bind UTP. Residues 290 to 539 (RIAIIAKYHK…VEAAIKYNKN (250 aa)) form the Glutamine amidotransferase type-1 domain. G352 is an L-glutamine binding site. Residue C379 is the Nucleophile; for glutamine hydrolysis of the active site. Residues 380-383 (LGMQ), E403, and R467 contribute to the L-glutamine site. Catalysis depends on residues H512 and E514.

Belongs to the CTP synthase family. As to quaternary structure, homotetramer.

It carries out the reaction UTP + L-glutamine + ATP + H2O = CTP + L-glutamate + ADP + phosphate + 2 H(+). It catalyses the reaction L-glutamine + H2O = L-glutamate + NH4(+). The catalysed reaction is UTP + NH4(+) + ATP = CTP + ADP + phosphate + 2 H(+). The protein operates within pyrimidine metabolism; CTP biosynthesis via de novo pathway; CTP from UDP: step 2/2. With respect to regulation, allosterically activated by GTP, when glutamine is the substrate; GTP has no effect on the reaction when ammonia is the substrate. The allosteric effector GTP functions by stabilizing the protein conformation that binds the tetrahedral intermediate(s) formed during glutamine hydrolysis. Inhibited by the product CTP, via allosteric rather than competitive inhibition. Functionally, catalyzes the ATP-dependent amination of UTP to CTP with either L-glutamine or ammonia as the source of nitrogen. Regulates intracellular CTP levels through interactions with the four ribonucleotide triphosphates. The protein is CTP synthase of Rickettsia bellii (strain RML369-C).